The primary structure comprises 256 residues: NifU-like protein, mitochondrial (256 aa).

The CxxC motif motif lies at 196 to 199; sequence CTSC.

The protein belongs to the NifU family. As to quaternary structure, homodimer; in absence of BOL3, probably bridged by an iron-sulfure cluster. Interacts with BOL3. Interacts with apo-target proteins, such as ACO1, LYS4, ACO2 and SDH2.

The protein localises to the mitochondrion matrix. In terms of biological role, involved in iron homeostasis within the mitochondrion where it is involved in the assembly of iron-sulfur proteins. Together with BOL3, required during the last step of iron-sulfur protein assembly when the iron-sulfur cluster is inserted into the target protein. Required for protecting iron sulfur clusters from oxidative damage. The protein is NifU-like protein, mitochondrial (NFU1) of Saccharomyces cerevisiae (strain ATCC 204508 / S288c) (Baker's yeast).